Consider the following 529-residue polypeptide: Bifunctional purine biosynthesis protein PurH (529 aa).

The 148-residue stretch at 2–149 (TDLHPVRRAL…KNHAFVNVVV (148 aa)) folds into the MGS-like domain.

The protein belongs to the PurH family.

The enzyme catalyses (6R)-10-formyltetrahydrofolate + 5-amino-1-(5-phospho-beta-D-ribosyl)imidazole-4-carboxamide = 5-formamido-1-(5-phospho-D-ribosyl)imidazole-4-carboxamide + (6S)-5,6,7,8-tetrahydrofolate. The catalysed reaction is IMP + H2O = 5-formamido-1-(5-phospho-D-ribosyl)imidazole-4-carboxamide. Its pathway is purine metabolism; IMP biosynthesis via de novo pathway; 5-formamido-1-(5-phospho-D-ribosyl)imidazole-4-carboxamide from 5-amino-1-(5-phospho-D-ribosyl)imidazole-4-carboxamide (10-formyl THF route): step 1/1. It participates in purine metabolism; IMP biosynthesis via de novo pathway; IMP from 5-formamido-1-(5-phospho-D-ribosyl)imidazole-4-carboxamide: step 1/1. In Ruegeria sp. (strain TM1040) (Silicibacter sp.), this protein is Bifunctional purine biosynthesis protein PurH.